Consider the following 245-residue polypeptide: MGRAFEYRKAAKMKRWGTMSRVFPKLGKIITMAAKEGGLDPDMNPKLRTAILNAKAQNMPKDNIDAAIKRAAAKDAADIKEITYDVKAHYGVQMIVECATDNHTRTVANVKAILNRNGGEMLTSGSLNFMFTKKAVFVFDKTDDMDLEELELDLIDYGLEEIEEDVEPQENGNDKAIVRIYGEFTSFGELSKALEDKGIEVKKATIEYIANTPVELDEKQLEEIEALIDKLEDDEDVQNVFTNIN.

Belongs to the TACO1 family.

It localises to the cytoplasm. The protein is Probable transcriptional regulatory protein SUN_1622 of Sulfurovum sp. (strain NBC37-1).